The primary structure comprises 274 residues: tRNA-cytidine(32) 2-sulfurtransferase (274 aa).

The short motif at 40–45 (SGGKDS) is the PP-loop motif element. Cysteine 115, cysteine 118, and cysteine 206 together coordinate [4Fe-4S] cluster.

The protein belongs to the TtcA family. In terms of assembly, homodimer. It depends on Mg(2+) as a cofactor. [4Fe-4S] cluster serves as cofactor.

It is found in the cytoplasm. The enzyme catalyses cytidine(32) in tRNA + S-sulfanyl-L-cysteinyl-[cysteine desulfurase] + AH2 + ATP = 2-thiocytidine(32) in tRNA + L-cysteinyl-[cysteine desulfurase] + A + AMP + diphosphate + H(+). It participates in tRNA modification. In terms of biological role, catalyzes the ATP-dependent 2-thiolation of cytidine in position 32 of tRNA, to form 2-thiocytidine (s(2)C32). The sulfur atoms are provided by the cysteine/cysteine desulfurase (IscS) system. The sequence is that of tRNA-cytidine(32) 2-sulfurtransferase from Stutzerimonas stutzeri (strain A1501) (Pseudomonas stutzeri).